The following is a 289-amino-acid chain: Elongation factor Ts (289 aa).

Residues 82–85 (TDFL) form an involved in Mg(2+) ion dislocation from EF-Tu region.

The protein belongs to the EF-Ts family.

It is found in the cytoplasm. Functionally, associates with the EF-Tu.GDP complex and induces the exchange of GDP to GTP. It remains bound to the aminoacyl-tRNA.EF-Tu.GTP complex up to the GTP hydrolysis stage on the ribosome. This is Elongation factor Ts from Pseudomonas paraeruginosa (strain DSM 24068 / PA7) (Pseudomonas aeruginosa (strain PA7)).